The primary structure comprises 571 residues: Proline--tRNA ligase (571 aa).

The protein belongs to the class-II aminoacyl-tRNA synthetase family. ProS type 1 subfamily. Homodimer.

It is found in the cytoplasm. It carries out the reaction tRNA(Pro) + L-proline + ATP = L-prolyl-tRNA(Pro) + AMP + diphosphate. Catalyzes the attachment of proline to tRNA(Pro) in a two-step reaction: proline is first activated by ATP to form Pro-AMP and then transferred to the acceptor end of tRNA(Pro). As ProRS can inadvertently accommodate and process non-cognate amino acids such as alanine and cysteine, to avoid such errors it has two additional distinct editing activities against alanine. One activity is designated as 'pretransfer' editing and involves the tRNA(Pro)-independent hydrolysis of activated Ala-AMP. The other activity is designated 'posttransfer' editing and involves deacylation of mischarged Ala-tRNA(Pro). The misacylated Cys-tRNA(Pro) is not edited by ProRS. The chain is Proline--tRNA ligase from Ligilactobacillus salivarius (strain UCC118) (Lactobacillus salivarius).